The following is a 146-amino-acid chain: VHLTAAEKSAILDLWGKVNVGEIGAEALGRLLVVYPWTQRFFEKFGDLSSASAIMSNAHVKSHGAKVLASFSEGLKHLQDLKGTFAKLSELHCDKLHVDPENFRLLGNMIVIALAHHHPSEFTPCTQAAFQKVTAGVANALAHKYH.

N-acetylvaline is present on valine 1. The 145-residue stretch at 2 to 146 (HLTAAEKSAI…VANALAHKYH (145 aa)) folds into the Globin domain. Histidine 63 lines the heme b pocket. Lysine 82 is modified (N6-acetyllysine). Position 92 (histidine 92) interacts with heme b. Cysteine 93 carries the S-nitrosocysteine modification. At lysine 144 the chain carries N6-acetyllysine.

It belongs to the globin family. As to quaternary structure, heterotetramer of two alpha chains and two beta chains. As to expression, red blood cells.

In terms of biological role, involved in oxygen transport from the lung to the various peripheral tissues. This is Hemoglobin subunit beta (HBB) from Cavia porcellus (Guinea pig).